Consider the following 85-residue polypeptide: Large ribosomal subunit protein bL27 (85 aa).

Residues 1–22 (MAHKKAGGSTRNGRDSESKRLG) form a disordered region.

Belongs to the bacterial ribosomal protein bL27 family.

The polypeptide is Large ribosomal subunit protein bL27 (Aliivibrio salmonicida (strain LFI1238) (Vibrio salmonicida (strain LFI1238))).